A 546-amino-acid chain; its full sequence is Pre-mRNA-splicing factor 38B (546 aa).

Residues 1-14 (MANNSPALTGNSQP) are compositionally biased toward polar residues. Positions 1-40 (MANNSPALTGNSQPQHQAAAAAAQQQQQCGGGGATKPAVS) are disordered. An N-acetylalanine modification is found at A2. S5 carries the post-translational modification Phosphoserine. Low complexity predominate over residues 15-28 (QHQAAAAAAQQQQQ). Position 227 is an N6-acetyllysine (K227). The interval 229 to 546 (IDQQIKTRPR…KQHKNKDETV (318 aa)) is disordered. The segment covering 243-255 (DGKEGAEEIDRHV) has biased composition (basic and acidic residues). A compositionally biased stretch (basic residues) spans 256-284 (ERRRSRSPRRSLSPRRSPRRSRSRSHHRE). Residues S288, S290, S318, and S320 each carry the phosphoserine modification. The segment covering 291–327 (FDRELEREKERQRLEREAKEREKERRRSRSIDRGLER) has biased composition (basic and acidic residues). A coiled-coil region spans residues 292–321 (DRELEREKERQRLEREAKEREKERRRSRSI). The segment covering 328-344 (RRSRSRERHRSRSRSRD) has biased composition (basic residues). The segment covering 345–421 (RKGDRRDRDR…HRDDKRDSKK (77 aa)) has biased composition (basic and acidic residues). The segment covering 422–450 (EKKHSRSRSRERKHRSRSRSRNAGKRSRS) has biased composition (basic residues). S448 bears the Phosphoserine mark. Residues 451–468 (RSKEKSSKHKNESKEKSN) are compositionally biased toward basic and acidic residues. S473, S475, and S481 each carry phosphoserine. The segment covering 480-495 (DSVEKSKKREHSPSKE) has biased composition (basic and acidic residues). Basic residues predominate over residues 496–510 (KSRKRSRSKERSHKR). Residues 511 to 546 (DHSDSKDQSDKHDRRRSQSIEQESQEKQHKNKDETV) show a composition bias toward basic and acidic residues. 3 positions are modified to phosphoserine: S527, S529, and S534.

This sequence belongs to the PRP38 family.

It is found in the nucleus. May be required for pre-mRNA splicing. The polypeptide is Pre-mRNA-splicing factor 38B (PRPF38B) (Homo sapiens (Human)).